Here is a 631-residue protein sequence, read N- to C-terminus: Phosphomethylpyrimidine synthase (631 aa).

Residues asparagine 239, methionine 268, tyrosine 297, histidine 333, 353-355, 394-397, and glutamate 433 contribute to the substrate site; these read SRG and DGLR. Histidine 437 lines the Zn(2+) pocket. A substrate-binding site is contributed by tyrosine 460. Histidine 501 contributes to the Zn(2+) binding site. The [4Fe-4S] cluster site is built by cysteine 581, cysteine 584, and cysteine 589.

This sequence belongs to the ThiC family. As to quaternary structure, homodimer. It depends on [4Fe-4S] cluster as a cofactor.

It carries out the reaction 5-amino-1-(5-phospho-beta-D-ribosyl)imidazole + S-adenosyl-L-methionine = 4-amino-2-methyl-5-(phosphooxymethyl)pyrimidine + CO + 5'-deoxyadenosine + formate + L-methionine + 3 H(+). The protein operates within cofactor biosynthesis; thiamine diphosphate biosynthesis. In terms of biological role, catalyzes the synthesis of the hydroxymethylpyrimidine phosphate (HMP-P) moiety of thiamine from aminoimidazole ribotide (AIR) in a radical S-adenosyl-L-methionine (SAM)-dependent reaction. The chain is Phosphomethylpyrimidine synthase from Shigella flexneri serotype 5b (strain 8401).